A 112-amino-acid chain; its full sequence is Probable fatty acid-binding protein (112 aa).

The protein belongs to the calycin superfamily. Fatty-acid binding protein (FABP) family.

The sequence is that of Probable fatty acid-binding protein from Anopheles gambiae (African malaria mosquito).